The primary structure comprises 317 residues: Acetyl-coenzyme A carboxylase carboxyl transferase subunit alpha (317 aa).

The CoA carboxyltransferase C-terminal domain maps to 40 to 294; that stretch reads RLQKKSEELT…KQQILADLQD (255 aa).

The protein belongs to the AccA family. In terms of assembly, acetyl-CoA carboxylase is a heterohexamer composed of biotin carboxyl carrier protein (AccB), biotin carboxylase (AccC) and two subunits each of ACCase subunit alpha (AccA) and ACCase subunit beta (AccD).

It localises to the cytoplasm. It catalyses the reaction N(6)-carboxybiotinyl-L-lysyl-[protein] + acetyl-CoA = N(6)-biotinyl-L-lysyl-[protein] + malonyl-CoA. It participates in lipid metabolism; malonyl-CoA biosynthesis; malonyl-CoA from acetyl-CoA: step 1/1. Its function is as follows. Component of the acetyl coenzyme A carboxylase (ACC) complex. First, biotin carboxylase catalyzes the carboxylation of biotin on its carrier protein (BCCP) and then the CO(2) group is transferred by the carboxyltransferase to acetyl-CoA to form malonyl-CoA. The chain is Acetyl-coenzyme A carboxylase carboxyl transferase subunit alpha from Actinobacillus pleuropneumoniae serotype 5b (strain L20).